The sequence spans 266 residues: Thymidylate synthase (266 aa).

A dUMP-binding site is contributed by Arg24. His54 serves as a coordination point for (6R)-5,10-methylene-5,6,7,8-tetrahydrofolate. Arg129–Arg130 is a dUMP binding site. Cys149 acts as the Nucleophile in catalysis. DUMP is bound by residues Arg169–Asp172, Asn180, and His210–Tyr212. Asp172 serves as a coordination point for (6R)-5,10-methylene-5,6,7,8-tetrahydrofolate. Position 265 (Ala265) interacts with (6R)-5,10-methylene-5,6,7,8-tetrahydrofolate.

It belongs to the thymidylate synthase family. Bacterial-type ThyA subfamily. Homodimer.

Its subcellular location is the cytoplasm. It catalyses the reaction dUMP + (6R)-5,10-methylene-5,6,7,8-tetrahydrofolate = 7,8-dihydrofolate + dTMP. The protein operates within pyrimidine metabolism; dTTP biosynthesis. Its function is as follows. Catalyzes the reductive methylation of 2'-deoxyuridine-5'-monophosphate (dUMP) to 2'-deoxythymidine-5'-monophosphate (dTMP) while utilizing 5,10-methylenetetrahydrofolate (mTHF) as the methyl donor and reductant in the reaction, yielding dihydrofolate (DHF) as a by-product. This enzymatic reaction provides an intracellular de novo source of dTMP, an essential precursor for DNA biosynthesis. This is Thymidylate synthase from Nocardia farcinica (strain IFM 10152).